The primary structure comprises 531 residues: Probable bifunctional methylthioribulose-1-phosphate dehydratase/enolase-phosphatase E1 2 (531 aa).

The segment at 1–248 (MGVPSEGAVG…AIKLHQLGLD (248 aa)) is methylthioribulose-1-phosphate dehydratase. Residue Cys-120 coordinates substrate. Zn(2+) is bound by residues His-138 and His-140. The active-site Proton donor/acceptor; for methylthioribulose-1-phosphate dehydratase activity is Glu-163. His-213 is a binding site for Zn(2+). An enolase-phosphatase E1 region spans residues 292 to 531 (ILLDIEGTTT…FRTIETFLEI (240 aa)). Asp-295 and Glu-297 together coordinate Mg(2+). Residues 430-431 (SS) and Lys-464 each bind substrate. Asp-490 provides a ligand contact to Mg(2+).

This sequence in the N-terminal section; belongs to the aldolase class II family. MtnB subfamily. In the C-terminal section; belongs to the HAD-like hydrolase superfamily. MasA/MtnC family. The cofactor is Zn(2+). Mg(2+) is required as a cofactor.

It catalyses the reaction 5-(methylsulfanyl)-D-ribulose 1-phosphate = 5-methylsulfanyl-2,3-dioxopentyl phosphate + H2O. It carries out the reaction 5-methylsulfanyl-2,3-dioxopentyl phosphate + H2O = 1,2-dihydroxy-5-(methylsulfanyl)pent-1-en-3-one + phosphate. It participates in amino-acid biosynthesis; L-methionine biosynthesis via salvage pathway; L-methionine from S-methyl-5-thio-alpha-D-ribose 1-phosphate: step 2/6. The protein operates within amino-acid biosynthesis; L-methionine biosynthesis via salvage pathway; L-methionine from S-methyl-5-thio-alpha-D-ribose 1-phosphate: step 3/6. Its pathway is amino-acid biosynthesis; L-methionine biosynthesis via salvage pathway; L-methionine from S-methyl-5-thio-alpha-D-ribose 1-phosphate: step 4/6. The sequence is that of Probable bifunctional methylthioribulose-1-phosphate dehydratase/enolase-phosphatase E1 2 from Vitis vinifera (Grape).